The sequence spans 203 residues: FMN-dependent NADH:quinone oxidoreductase (203 aa).

143–146 (SNGG) serves as a coordination point for FMN.

It belongs to the azoreductase type 1 family. In terms of assembly, homodimer. FMN serves as cofactor.

It carries out the reaction 2 a quinone + NADH + H(+) = 2 a 1,4-benzosemiquinone + NAD(+). The enzyme catalyses N,N-dimethyl-1,4-phenylenediamine + anthranilate + 2 NAD(+) = 2-(4-dimethylaminophenyl)diazenylbenzoate + 2 NADH + 2 H(+). In terms of biological role, quinone reductase that provides resistance to thiol-specific stress caused by electrophilic quinones. Functionally, also exhibits azoreductase activity. Catalyzes the reductive cleavage of the azo bond in aromatic azo compounds to the corresponding amines. The sequence is that of FMN-dependent NADH:quinone oxidoreductase from Streptococcus suis (strain 98HAH33).